The following is a 37-amino-acid chain: Large ribosomal subunit protein bL36 (37 aa).

The protein belongs to the bacterial ribosomal protein bL36 family.

The polypeptide is Large ribosomal subunit protein bL36 (rpmJ) (Mycoplasma sp).